Reading from the N-terminus, the 710-residue chain is Polyribonucleotide nucleotidyltransferase (710 aa).

D491 and D497 together coordinate Mg(2+). The region spanning P558–I618 is the KH domain. The S1 motif domain maps to G628–K696.

Belongs to the polyribonucleotide nucleotidyltransferase family. Mg(2+) serves as cofactor.

The protein resides in the cytoplasm. It catalyses the reaction RNA(n+1) + phosphate = RNA(n) + a ribonucleoside 5'-diphosphate. Involved in mRNA degradation. Catalyzes the phosphorolysis of single-stranded polyribonucleotides processively in the 3'- to 5'-direction. This Thermodesulfovibrio yellowstonii (strain ATCC 51303 / DSM 11347 / YP87) protein is Polyribonucleotide nucleotidyltransferase.